Reading from the N-terminus, the 122-residue chain is Large ribosomal subunit protein uL14 (122 aa).

The protein belongs to the universal ribosomal protein uL14 family. In terms of assembly, part of the 50S ribosomal subunit. Forms a cluster with proteins L3 and L19. In the 70S ribosome, L14 and L19 interact and together make contacts with the 16S rRNA in bridges B5 and B8.

In terms of biological role, binds to 23S rRNA. Forms part of two intersubunit bridges in the 70S ribosome. The polypeptide is Large ribosomal subunit protein uL14 (Beutenbergia cavernae (strain ATCC BAA-8 / DSM 12333 / CCUG 43141 / JCM 11478 / NBRC 16432 / NCIMB 13614 / HKI 0122)).